A 505-amino-acid chain; its full sequence is Protein FAM114A2 (505 aa).

A disordered region spans residues 1–65 (MSDKDDIETP…KPSSDLETSK (65 aa)). A compositionally biased stretch (basic and acidic residues) spans 51–63 (KRPETKPSSDLET). 3 positions are modified to phosphoserine: serine 87, serine 146, and serine 209. Residues 268-295 (LNSLSGEELETLKVELEQLKETFSLAEF) adopt a coiled-coil conformation. The disordered stretch occupies residues 342 to 366 (KSLTKPLAENEEGEKQSEAENTEQV).

It belongs to the FAM114 family.

The chain is Protein FAM114A2 (FAM114A2) from Homo sapiens (Human).